Here is a 367-residue protein sequence, read N- to C-terminus: MSLADSVLAINNDLPIRTDSPVHSGKVRSVYWLTDADSRRLITTKGYNVPEDTPLAIMVISDRISAFDCIFHGEGGLKGIPGKGAALNAISNHWFKLFAENGLADSHILDIPHPFVWIVQKARPIKVEAICRQYITGSMWRAYSKGERVFCGITLPEGLEKDQKLPELLITPSTKGILTGIPGVPAQDDVNISRSDIEANYQAFGFEQLADIDLYEKLLKDGFKVISAALAKLDQVFVDTKFEFGYVTDKDGNSKLIYMDEVGTPDSSRIWDGAAYRDGKILENSKEGFRQFLLNHFPDPDVLLNKDRMPEREALARDNDLPLEAMMQVSRTYTGVAEKVTGAPIPLPANPKADIIKILREEYDLIV.

This sequence belongs to the SAICAR synthetase family.

The enzyme catalyses 5-amino-1-(5-phospho-D-ribosyl)imidazole-4-carboxylate + L-aspartate + ATP = (2S)-2-[5-amino-1-(5-phospho-beta-D-ribosyl)imidazole-4-carboxamido]succinate + ADP + phosphate + 2 H(+). It participates in purine metabolism; IMP biosynthesis via de novo pathway; 5-amino-1-(5-phospho-D-ribosyl)imidazole-4-carboxamide from 5-amino-1-(5-phospho-D-ribosyl)imidazole-4-carboxylate: step 1/2. This is Phosphoribosylaminoimidazole-succinocarboxamide synthase from Shewanella baltica (strain OS195).